A 542-amino-acid polypeptide reads, in one-letter code: MTFSEILDRVGSMGHFQFLHVAILGLPILNMANHNLLQIFTAATPVHHCRPPHNASTGPWVLPMGPNGKPERCLRFVHPPNASLPNDTQRAMEPCLDGWVYNSTKDSIVTEWDLVCNSNKLKEMAQSIFMAGILIGGLVLGDLSDRFGRRPILTCSYLLLAASGSGAAFSPTFPIYMVFRFLCGFGISGITLSTVILNVEWVPTRMRAIMSTALGYCYTFGQFILPGLAYAIPQWRWLQLTVSIPFFVFFLSSWWTPESIRWLVLSGKSSKALKILRRVAVFNGKKEEGERLSLEELKLNLQKEISLAKAKYTASDLFRIPMLRRMTFCLSLAWFATGFAYYSLAMGVEEFGVNLYILQIIFGGVDVPAKFITILSLSYLGRHTTQAAALLLAGGAILALTFVPLDLQTVRTVLAVFGKGCLSSSFSCLFLYTSELYPTVIRQTGMGVSNLWTRVGSMVSPLVKITGEVQPFIPNIIYGITALLGGSAALFLPETLNQPLPETIEDLENWSLRAKKPKQEPEVEKASQRIPLQPHGPGLGSS.

Residues 1–9 (MTFSEILDR) are Cytoplasmic-facing. Phosphoserine is present on S4. The helical transmembrane segment at 10–30 (VGSMGHFQFLHVAILGLPILN) threads the bilayer. Residues 31–123 (MANHNLLQIF…LVCNSNKLKE (93 aa)) are Extracellular-facing. N-linked (GlcNAc...) asparagine glycosylation is found at N86 and N102. A helical membrane pass occupies residues 124–144 (MAQSIFMAGILIGGLVLGDLS). Topologically, residues 145 to 154 (DRFGRRPILT) are cytoplasmic. Residues 155-175 (CSYLLLAASGSGAAFSPTFPI) traverse the membrane as a helical segment. A topological domain (extracellular) is located at residue Y176. The helical transmembrane segment at 177 to 197 (MVFRFLCGFGISGITLSTVIL) threads the bilayer. At 198-212 (NVEWVPTRMRAIMST) the chain is on the cytoplasmic side. The chain crosses the membrane as a helical span at residues 213–233 (ALGYCYTFGQFILPGLAYAIP). The Extracellular segment spans residues 234–236 (QWR). A helical membrane pass occupies residues 237–257 (WLQLTVSIPFFVFFLSSWWTP). Topologically, residues 258–327 (ESIRWLVLSG…FRIPMLRRMT (70 aa)) are cytoplasmic. A helical transmembrane segment spans residues 328–348 (FCLSLAWFATGFAYYSLAMGV). The Extracellular segment spans residues 349-354 (EEFGVN). A helical transmembrane segment spans residues 355–375 (LYILQIIFGGVDVPAKFITIL). At 376-386 (SLSYLGRHTTQ) the chain is on the cytoplasmic side. The helical transmembrane segment at 387 to 407 (AAALLLAGGAILALTFVPLDL) threads the bilayer. Residues 408–411 (QTVR) are Extracellular-facing. A helical transmembrane segment spans residues 412–432 (TVLAVFGKGCLSSSFSCLFLY). Topologically, residues 433-471 (TSELYPTVIRQTGMGVSNLWTRVGSMVSPLVKITGEVQP) are cytoplasmic. Residues 472 to 492 (FIPNIIYGITALLGGSAALFL) traverse the membrane as a helical segment. Residues 493-542 (PETLNQPLPETIEDLENWSLRAKKPKQEPEVEKASQRIPLQPHGPGLGSS) lie on the Extracellular side of the membrane. Residues 515-542 (KKPKQEPEVEKASQRIPLQPHGPGLGSS) form a disordered region. Over residues 517–527 (PKQEPEVEKAS) the composition is skewed to basic and acidic residues.

The protein belongs to the major facilitator (TC 2.A.1) superfamily. Organic cation transporter (TC 2.A.1.19) family. In terms of tissue distribution, strongly expressed in kidney. Weaker expression in brain and skeletal muscle. Expressed in adrenal glands.

The protein localises to the basolateral cell membrane. The enzyme catalyses estrone 3-sulfate(out) + glutarate(in) = estrone 3-sulfate(in) + glutarate(out). The catalysed reaction is estrone 3-sulfate(in) + 2-oxoglutarate(out) = estrone 3-sulfate(out) + 2-oxoglutarate(in). It catalyses the reaction glutarate(in) + 2-oxoglutarate(out) = glutarate(out) + 2-oxoglutarate(in). It carries out the reaction urate(in) + 2-oxoglutarate(out) = urate(out) + 2-oxoglutarate(in). The enzyme catalyses taurocholate(out) + glutarate(in) = taurocholate(in) + glutarate(out). The catalysed reaction is dehydroepiandrosterone 3-sulfate(out) + glutarate(in) = dehydroepiandrosterone 3-sulfate(in) + glutarate(out). It catalyses the reaction prostaglandin F2alpha(out) + glutarate(in) = prostaglandin F2alpha(in) + glutarate(out). It carries out the reaction prostaglandin F2alpha(out) + 2-oxoglutarate(in) = prostaglandin F2alpha(in) + 2-oxoglutarate(out). The enzyme catalyses (R)-carnitine(out) + 2-oxoglutarate(in) = (R)-carnitine(in) + 2-oxoglutarate(out). The catalysed reaction is glutarate(in) + (R)-carnitine(out) = glutarate(out) + (R)-carnitine(in). It catalyses the reaction prostaglandin E2(out) + 2-oxoglutarate(in) = prostaglandin E2(in) + 2-oxoglutarate(out). It carries out the reaction prostaglandin E2(out) + glutarate(in) = prostaglandin E2(in) + glutarate(out). The enzyme catalyses urate(in) + glutarate(out) = urate(out) + glutarate(in). The catalysed reaction is taurocholate(out) + 2-oxoglutarate(in) = taurocholate(in) + 2-oxoglutarate(out). It catalyses the reaction dehydroepiandrosterone 3-sulfate(out) + 2-oxoglutarate(in) = dehydroepiandrosterone 3-sulfate(in) + 2-oxoglutarate(out). It carries out the reaction kynurenate(out) + a dicarboxylate(in) = kynurenate(in) + a dicarboxylate(out). The enzyme catalyses (indol-3-yl)acetate(out) + a dicarboxylate(in) = (indol-3-yl)acetate(in) + a dicarboxylate(out). The catalysed reaction is indoxyl sulfate(out) + a dicarboxylate(in) = indoxyl sulfate(in) + a dicarboxylate(out). It catalyses the reaction N-benzoylglycine(out) + a dicarboxylate(in) = N-benzoylglycine(in) + a dicarboxylate(out). It carries out the reaction 3-carboxy-4-methyl-5-propyl-2-furanpropanoate(out) + a dicarboxylate(in) = 3-carboxy-4-methyl-5-propyl-2-furanpropanoate(in) + a dicarboxylate(out). The enzyme catalyses (6R)-L-erythro-5,6,7,8-tetrahydrobiopterin(out) + a dicarboxylate(in) = (6R)-L-erythro-5,6,7,8-tetrahydrobiopterin(in) + a dicarboxylate(out). The catalysed reaction is L-erythro-7,8-dihydrobiopterin(out) + a dicarboxylate(in) = L-erythro-7,8-dihydrobiopterin(in) + a dicarboxylate(out). It catalyses the reaction L-sepiapterin(out) + a dicarboxylate(in) = L-sepiapterin(in) + a dicarboxylate(out). Functionally, functions as an organic anion/dicarboxylate exchanger that couples organic anion uptake indirectly to the sodium gradient. Transports organic anions such as estrone 3-sulfate (E1S) and urate in exchange for dicarboxylates such as glutarate or ketoglutarate (2-oxoglutarate). Plays an important role in the excretion of endogenous and exogenous organic anions, especially from the kidney and the brain. E1S transport is pH- and chloride-dependent and may also involve E1S/cGMP exchange. Responsible for the transport of prostaglandin E2 (PGE2) and prostaglandin F2(alpha) (PGF2(alpha)) in the basolateral side of the renal tubule. Involved in the transport of neuroactive tryptophan metabolites kynurenate and xanthurenate. Functions as a biopterin transporters involved in the uptake and the secretion of coenzymes tetrahydrobiopterin (BH4), dihydrobiopterin (BH2) and sepiapterin to urine, thereby determining baseline levels of blood biopterins. May be involved in the basolateral transport of steviol, a metabolite of the popular sugar substitute stevioside. May participate in the detoxification/ renal excretion of drugs and xenobiotics, such as the histamine H(2)-receptor antagonists fexofenadine and cimetidine, the antibiotic benzylpenicillin (PCG), the anionic herbicide 2,4-dichloro-phenoxyacetate (2,4-D), the diagnostic agent p-aminohippurate (PAH), the antiviral acyclovir (ACV), and the mycotoxin ochratoxin (OTA), by transporting these exogenous organic anions across the cell membrane in exchange for dicarboxylates such as 2-oxoglutarate. Contributes to the renal uptake of potent uremic toxins (indoxyl sulfate (IS), indole acetate (IA), hippurate/N-benzoylglycine (HA) and 3-carboxy-4-methyl-5-propyl-2-furanpropionate (CMPF)), pravastatin, PCG, E1S and dehydroepiandrosterone sulfate (DHEAS), and is partly involved in the renal uptake of temocaprilat (an angiotensin-converting enzyme (ACE) inhibitor). May contribute to the release of cortisol in the adrenals. Involved in one of the detoxification systems on the choroid plexus (CP), removes substrates such as E1S or taurocholate (TC), PCG, 2,4-D and PAH, from the cerebrospinal fluid (CSF) to the blood for eventual excretion in urine and bile. Also contributes to the uptake of several other organic compounds such as the prostanoids prostaglandin E(2) and prostaglandin F(2-alpha), L-carnitine, and the therapeutic drugs allopurinol, 6-mercaptopurine (6-MP) and 5-fluorouracil (5-FU). Mediates the transport of PAH, PCG, and the statins pravastatin and pitavastatin, from the cerebrum into the blood circulation across the blood-brain barrier (BBB). In summary, plays a role in the efflux of drugs and xenobiotics, helping reduce their undesired toxicological effects on the body. The sequence is that of Organic anion transporter 3 from Homo sapiens (Human).